We begin with the raw amino-acid sequence, 198 residues long: Beta-crystallin A1 (198 aa).

The segment at 1-13 is N-terminal arm; sequence MLYLVLFLVPFNS. Beta/gamma crystallin 'Greek key' domains follow at residues 14-53 and 54-100; these read IQITIYDQENFQGKRMEFTSSCPNVSERNFDNVRSLKVEC and GAWI…RPIC. S-glutathionyl cysteine; alternate occurs at positions 65 and 100. S-methylcysteine; alternate is present on residues Cys-65 and Cys-100. A connecting peptide region spans residues 101 to 106; it reads SANHKE. 2 Beta/gamma crystallin 'Greek key' domains span residues 107–148 and 149–197; these read SKIT…KIQC and GAWV…RRIQ.

Belongs to the beta/gamma-crystallin family. In terms of assembly, homo/heterodimer, or complexes of higher-order. The structure of beta-crystallin oligomers seems to be stabilized through interactions between the N-terminal arms. Interacts with CRYBA1.

Its function is as follows. Crystallins are the dominant structural components of the vertebrate eye lens. This chain is Beta-crystallin A1, found in Mus musculus (Mouse).